The sequence spans 1077 residues: Ubiquitin carboxyl-terminal hydrolase 28 (1077 aa).

The tract at residues 60 to 80 (DERVKEPSQDTVATEPSEVEG) is disordered. Serine 67 carries the phosphoserine modification. The 20-residue stretch at 97–116 (DNKDDLQAAIALSLLESPKI) folds into the UIM domain. Lysine 99 is covalently cross-linked (Glycyl lysine isopeptide (Lys-Gly) (interchain with G-Cter in SUMO2)). Residues 162–650 (VGLKNVGNTC…SAYCLMYIND (489 aa)) enclose the USP domain. Catalysis depends on cysteine 171, which acts as the Nucleophile. Residue serine 375 is modified to Phosphoserine. The tract at residues 477–535 (HCSVSDQTSKESTSTESSSQDVESTFSSPEDSLPKSKPLTSSRSSMEMPSQPAPRTVTD) is disordered. Low complexity predominate over residues 481 to 501 (SDQTSKESTSTESSSQDVEST). The segment covering 514–524 (PLTSSRSSMEM) has biased composition (polar residues). Serine 550 is modified (phosphoserine). The active-site Proton acceptor is histidine 600. The segment at 697–728 (EEQSCKIPQMESSTNSSSQDYSTSQEPSVASS) is disordered. Low complexity predominate over residues 707–724 (ESSTNSSSQDYSTSQEPS). Serine 714 is subject to Phosphoserine. Residue lysine 759 forms a Glycyl lysine isopeptide (Lys-Gly) (interchain with G-Cter in SUMO2) linkage. Residue threonine 1048 is modified to Phosphothreonine.

The protein belongs to the peptidase C19 family. USP28 subfamily. Interacts with ZNF304. Interacts with PRKD1. Interacts with TP53BP1. Interacts with isoform 1 of FBXW7; following DNA damage, dissociates from FBXW7 leading to degradation of MYC. In terms of processing, degraded upon nickel ion level or hypoxia exposure. Phosphorylated upon DNA damage at Ser-67 and Ser-714, by ATM or ATR. Phosphorylated by PRKD1.

It is found in the nucleus. The protein resides in the nucleoplasm. It catalyses the reaction Thiol-dependent hydrolysis of ester, thioester, amide, peptide and isopeptide bonds formed by the C-terminal Gly of ubiquitin (a 76-residue protein attached to proteins as an intracellular targeting signal).. In terms of biological role, deubiquitinase involved in DNA damage response checkpoint and MYC proto-oncogene stability. Involved in DNA damage induced apoptosis by specifically deubiquitinating proteins of the DNA damage pathway such as CLSPN. Also involved in G2 DNA damage checkpoint, by deubiquitinating CLSPN, and preventing its degradation by the anaphase promoting complex/cyclosome (APC/C). In contrast, it does not deubiquitinate PLK1. Specifically deubiquitinates MYC in the nucleoplasm, leading to prevent MYC degradation by the proteasome: acts by specifically interacting with isoform 1 of FBXW7 (FBW7alpha) in the nucleoplasm and counteracting ubiquitination of MYC by the SCF(FBW7) complex. In contrast, it does not interact with isoform 4 of FBXW7 (FBW7gamma) in the nucleolus, allowing MYC degradation and explaining the selective MYC degradation in the nucleolus. Deubiquitinates ZNF304, hence preventing ZNF304 degradation by the proteasome and leading to the activated KRAS-mediated promoter hypermethylation and transcriptional silencing of tumor suppressor genes (TSGs) in a subset of colorectal cancers (CRC) cells. The polypeptide is Ubiquitin carboxyl-terminal hydrolase 28 (USP28) (Homo sapiens (Human)).